The primary structure comprises 334 residues: Methionyl-tRNA formyltransferase (334 aa).

111-114 (SILP) is a binding site for (6S)-5,6,7,8-tetrahydrofolate.

The protein belongs to the Fmt family.

It carries out the reaction L-methionyl-tRNA(fMet) + (6R)-10-formyltetrahydrofolate = N-formyl-L-methionyl-tRNA(fMet) + (6S)-5,6,7,8-tetrahydrofolate + H(+). Functionally, attaches a formyl group to the free amino group of methionyl-tRNA(fMet). The formyl group appears to play a dual role in the initiator identity of N-formylmethionyl-tRNA by promoting its recognition by IF2 and preventing the misappropriation of this tRNA by the elongation apparatus. The chain is Methionyl-tRNA formyltransferase from Trichormus variabilis (strain ATCC 29413 / PCC 7937) (Anabaena variabilis).